A 146-amino-acid polypeptide reads, in one-letter code: MLKTLRFGTRAFGQNLNIAKRNFCTRYTNDHEWVTSLGSQNYRLGITDFAQKQLGDIVFVEIPQIGATLSQGQPITVVESVKAASDIYIPMDGSITTVNQELESSPELVNEEPMGDGWIVEYKSSKTDQFQSLMNKAQYDEYIKEH.

Residues 1–30 (MLKTLRFGTRAFGQNLNIAKRNFCTRYTND) constitute a mitochondrion transit peptide. The Lipoyl-binding domain maps to 41-123 (NYRLGITDFA…MGDGWIVEYK (83 aa)). At Lys-82 the chain carries N6-lipoyllysine.

The protein belongs to the GcvH family. As to quaternary structure, the glycine cleavage system is composed of four proteins: P, T, L and H. The cofactor is (R)-lipoate.

The protein resides in the mitochondrion. Its function is as follows. The glycine cleavage system catalyzes the degradation of glycine. The H protein shuttles the methylamine group of glycine from the P protein to the T protein. The chain is Probable glycine cleavage system H protein 1, mitochondrial (gcvH1) from Dictyostelium discoideum (Social amoeba).